A 133-amino-acid chain; its full sequence is Ribonuclease P protein component (133 aa).

The protein belongs to the RnpA family. In terms of assembly, consists of a catalytic RNA component (M1 or rnpB) and a protein subunit.

It carries out the reaction Endonucleolytic cleavage of RNA, removing 5'-extranucleotides from tRNA precursor.. In terms of biological role, RNaseP catalyzes the removal of the 5'-leader sequence from pre-tRNA to produce the mature 5'-terminus. It can also cleave other RNA substrates such as 4.5S RNA. The protein component plays an auxiliary but essential role in vivo by binding to the 5'-leader sequence and broadening the substrate specificity of the ribozyme. This is Ribonuclease P protein component from Pseudomonas putida (strain ATCC 47054 / DSM 6125 / CFBP 8728 / NCIMB 11950 / KT2440).